The sequence spans 123 residues: Testis-expressed protein 12 (123 aa).

Positions 1–41 (MMANHLVKPDSRNCKRARELEPQVSDSPQVSSLGKSESSLS) are disordered. Residues 7 to 21 (VKPDSRNCKRARELE) show a composition bias toward basic and acidic residues. Over residues 31–41 (SSLGKSESSLS) the composition is skewed to low complexity.

As to quaternary structure, interacts with SYCE2. Testis (at protein level). Detected in ovary. Expressed in both male and female germ cells.

It is found in the chromosome. Component of the transverse central element of synaptonemal complexes (SCS), formed between homologous chromosomes during meiotic prophase. Requires SYCP1 in order to be incorporated into the central element. In Mus musculus (Mouse), this protein is Testis-expressed protein 12 (Tex12).